The following is a 358-amino-acid chain: Chorismate synthase (358 aa).

Arg-46 provides a ligand contact to NADP(+). FMN contacts are provided by residues 123–125, 235–236, Gly-275, 290–294, and Arg-316; these read RSS, NA, and KPTPS.

The protein belongs to the chorismate synthase family. Homotetramer. It depends on FMNH2 as a cofactor.

It carries out the reaction 5-O-(1-carboxyvinyl)-3-phosphoshikimate = chorismate + phosphate. The protein operates within metabolic intermediate biosynthesis; chorismate biosynthesis; chorismate from D-erythrose 4-phosphate and phosphoenolpyruvate: step 7/7. Its function is as follows. Catalyzes the anti-1,4-elimination of the C-3 phosphate and the C-6 proR hydrogen from 5-enolpyruvylshikimate-3-phosphate (EPSP) to yield chorismate, which is the branch point compound that serves as the starting substrate for the three terminal pathways of aromatic amino acid biosynthesis. This reaction introduces a second double bond into the aromatic ring system. The chain is Chorismate synthase from Sulfurimonas denitrificans (strain ATCC 33889 / DSM 1251) (Thiomicrospira denitrificans (strain ATCC 33889 / DSM 1251)).